The following is an 88-amino-acid chain: UPF0473 protein CLL_A1177 (88 aa).

Belongs to the UPF0473 family.

The chain is UPF0473 protein CLL_A1177 from Clostridium botulinum (strain Eklund 17B / Type B).